Consider the following 335-residue polypeptide: Nucleoid-associated protein PputGB1_0980 (335 aa).

Belongs to the YejK family.

Its subcellular location is the cytoplasm. It localises to the nucleoid. This is Nucleoid-associated protein PputGB1_0980 from Pseudomonas putida (strain GB-1).